A 384-amino-acid polypeptide reads, in one-letter code: FAD-dependent urate hydroxylase (384 aa).

Residues Gly-11, 30-31 (EA), Ser-43, and Val-125 each bind FAD. Residues Asn-178, Arg-204, and 216-218 (YFF) each bind substrate. FAD is bound by residues Asp-285 and 295–299 (GQGGC).

This sequence belongs to the FAD-dependent urate hydroxylase family. Requires FAD as cofactor.

The catalysed reaction is urate + NADH + O2 + H(+) = 5-hydroxyisourate + NAD(+) + H2O. The protein operates within purine metabolism; urate degradation. Its function is as follows. Catalyzes the hydroxylation of uric acid to 5-hydroxyisourate. The sequence is that of FAD-dependent urate hydroxylase (hpxO) from Klebsiella pneumoniae.